We begin with the raw amino-acid sequence, 295 residues long: N-acetylmuramic acid 6-phosphate etherase (295 aa).

The region spanning 55–218 (AADALKQGGR…STGAMVKLGK (164 aa)) is the SIS domain. Residue Glu83 is the Proton donor of the active site. Glu114 is a catalytic residue.

Belongs to the GCKR-like family. MurNAc-6-P etherase subfamily. In terms of assembly, homodimer.

The catalysed reaction is N-acetyl-D-muramate 6-phosphate + H2O = N-acetyl-D-glucosamine 6-phosphate + (R)-lactate. The protein operates within amino-sugar metabolism; 1,6-anhydro-N-acetylmuramate degradation. Its pathway is amino-sugar metabolism; N-acetylmuramate degradation. It participates in cell wall biogenesis; peptidoglycan recycling. In terms of biological role, specifically catalyzes the cleavage of the D-lactyl ether substituent of MurNAc 6-phosphate, producing GlcNAc 6-phosphate and D-lactate. Together with AnmK, is also required for the utilization of anhydro-N-acetylmuramic acid (anhMurNAc) either imported from the medium or derived from its own cell wall murein, and thus plays a role in cell wall recycling. The chain is N-acetylmuramic acid 6-phosphate etherase from Yersinia pseudotuberculosis serotype O:1b (strain IP 31758).